Reading from the N-terminus, the 338-residue chain is UDP-3-O-acylglucosamine N-acyltransferase (338 aa).

The Proton acceptor role is filled by His-239.

Belongs to the transferase hexapeptide repeat family. LpxD subfamily. As to quaternary structure, homotrimer.

It catalyses the reaction a UDP-3-O-[(3R)-3-hydroxyacyl]-alpha-D-glucosamine + a (3R)-hydroxyacyl-[ACP] = a UDP-2-N,3-O-bis[(3R)-3-hydroxyacyl]-alpha-D-glucosamine + holo-[ACP] + H(+). It functions in the pathway bacterial outer membrane biogenesis; LPS lipid A biosynthesis. Functionally, catalyzes the N-acylation of UDP-3-O-acylglucosamine using 3-hydroxyacyl-ACP as the acyl donor. Is involved in the biosynthesis of lipid A, a phosphorylated glycolipid that anchors the lipopolysaccharide to the outer membrane of the cell. This is UDP-3-O-acylglucosamine N-acyltransferase from Xylella fastidiosa (strain 9a5c).